Consider the following 300-residue polypeptide: Transcription factor DUO1 (300 aa).

2 HTH myb-type domains span residues 8 to 64 (KEEI…RPNL) and 65 to 116 (KNGC…KRLA). DNA-binding regions (H-T-H motif) lie at residues 36–60 (WSSI…VNKL) and 89–112 (WARI…SSRQ). Positions 123–135 (SDASSSSFNPKSS) are enriched in low complexity. Residues 123–145 (SDASSSSFNPKSSSSHRLKGKNV) form a disordered region. The segment covering 136-145 (SSHRLKGKNV) has biased composition (basic residues).

Confined to inflorescences, especially in stamens and pollen.

It is found in the nucleus. Transcription activator that acts as a positive regulator of male germline development by promoting both gametic cell specification and cell cycle progression. Binds to canonical MYB sites 5'-AACCGTC-3', 5'-AAACCGC-3' and 5'-AACCGT-3' in promoters to trigger the expression of male germline-specific or enriched genes (e.g. MGH3, GEX2 and GCS1), including those required for fertilization. Required for sperm cell specification leading to pollen maturation by activating a germline-specific regulon. Involved in pollen mitosis entry at G2-M transition via the regulation of CYCB1-1, DAZ1 and DAZ2 expression. In Arabidopsis thaliana (Mouse-ear cress), this protein is Transcription factor DUO1.